The chain runs to 369 residues: Flagellar P-ring protein (369 aa).

The N-terminal stretch at 1-23 is a signal peptide; that stretch reads MRIASFFTVLLTLLTLNIAPASA.

Belongs to the FlgI family. In terms of assembly, the basal body constitutes a major portion of the flagellar organelle and consists of four rings (L,P,S, and M) mounted on a central rod.

It is found in the periplasm. It localises to the bacterial flagellum basal body. Its function is as follows. Assembles around the rod to form the L-ring and probably protects the motor/basal body from shearing forces during rotation. The chain is Flagellar P-ring protein from Pectobacterium carotovorum subsp. carotovorum (strain PC1).